Here is a 272-residue protein sequence, read N- to C-terminus: NH(3)-dependent NAD(+) synthetase (272 aa).

Tyr-33 is a deamido-NAD(+) binding site. Residues 45–52, Arg-79, and Gln-85 each bind ATP; that span reads GISGGQDS. Asp-51 contributes to the Mg(2+) binding site. Arg-138 lines the deamido-NAD(+) pocket. Thr-158 serves as a coordination point for ATP. Position 163 (Glu-163) interacts with Mg(2+). Deamido-NAD(+) is bound by residues Lys-171 and Asp-178. ATP-binding residues include Lys-187 and Thr-209. Residues Glu-224 and 258 to 259 each bind deamido-NAD(+); that span reads HK.

The protein belongs to the NAD synthetase family. Homodimer. Phosphorylated during sporulation.

It carries out the reaction deamido-NAD(+) + NH4(+) + ATP = AMP + diphosphate + NAD(+) + H(+). It participates in cofactor biosynthesis; NAD(+) biosynthesis; NAD(+) from deamido-NAD(+) (ammonia route): step 1/1. Its function is as follows. Catalyzes the ATP-dependent amidation of deamido-NAD to form NAD. Uses ammonia as a nitrogen source. The protein is NH(3)-dependent NAD(+) synthetase of Bacillus subtilis (strain 168).